A 140-amino-acid chain; its full sequence is MSKRGRGGSSGAKFRISLGLPVGAVINCADNTGAKNLYIISVKGIKGRLNRLPSAGVGDMVMATVKKGKPELRKKVHPAVVIRQRKSYRRKDGVFLYFEDNAGVIVNNKGEMKGSAITGPVAKECADLWPRIASNAGSIA.

It belongs to the universal ribosomal protein uL14 family. In terms of assembly, component of the large ribosomal subunit.

It is found in the cytoplasm. Functionally, component of the large ribosomal subunit. The ribosome is a large ribonucleoprotein complex responsible for the synthesis of proteins in the cell. The sequence is that of Large ribosomal subunit protein uL14 (rpl23) from Danio rerio (Zebrafish).